Here is a 131-residue protein sequence, read N- to C-terminus: Large ribosomal subunit protein bL12 (131 aa).

It belongs to the bacterial ribosomal protein bL12 family. As to quaternary structure, homodimer. Part of the ribosomal stalk of the 50S ribosomal subunit. Forms a multimeric L10(L12)X complex, where L10 forms an elongated spine to which 2 to 4 L12 dimers bind in a sequential fashion. Binds GTP-bound translation factors.

Functionally, forms part of the ribosomal stalk which helps the ribosome interact with GTP-bound translation factors. Is thus essential for accurate translation. The protein is Large ribosomal subunit protein bL12 of Prochlorococcus marinus (strain MIT 9515).